The primary structure comprises 421 residues: Glutamate dehydrogenase (421 aa).

The active site involves lysine 105. 220–226 is an NAD(+) binding site; sequence GYGNAGY.

It belongs to the Glu/Leu/Phe/Val dehydrogenases family. In terms of assembly, homohexamer.

It localises to the cytoplasm. It is found in the chromosome. It carries out the reaction L-glutamate + NAD(+) + H2O = 2-oxoglutarate + NH4(+) + NADH + H(+). The catalysed reaction is L-glutamate + NADP(+) + H2O = 2-oxoglutarate + NH4(+) + NADPH + H(+). This chain is Glutamate dehydrogenase (gdhA), found in Thermococcus kodakarensis (strain ATCC BAA-918 / JCM 12380 / KOD1) (Pyrococcus kodakaraensis (strain KOD1)).